A 608-amino-acid chain; its full sequence is DNA mismatch repair protein MutL (608 aa).

The protein belongs to the DNA mismatch repair MutL/HexB family.

Its function is as follows. This protein is involved in the repair of mismatches in DNA. It is required for dam-dependent methyl-directed DNA mismatch repair. May act as a 'molecular matchmaker', a protein that promotes the formation of a stable complex between two or more DNA-binding proteins in an ATP-dependent manner without itself being part of a final effector complex. The chain is DNA mismatch repair protein MutL from Anoxybacillus flavithermus (strain DSM 21510 / WK1).